Reading from the N-terminus, the 94-residue chain is Cystatin-A3 (94 aa).

The Secondary area of contact signature appears at 46 to 50; sequence QLVNG.

Belongs to the cystatin family.

Its subcellular location is the cytoplasm. Intracellular thiol proteinase inhibitor. The chain is Cystatin-A3 (cpiC) from Dictyostelium discoideum (Social amoeba).